The following is a 356-amino-acid chain: Heparan sulfate 2-O-sulfotransferase 1 (356 aa).

Residues 1–11 lie on the Cytoplasmic side of the membrane; the sequence is MGLLRIMMPPK. The helical; Signal-anchor for type II membrane protein transmembrane segment at 12 to 28 threads the bilayer; it reads LQLLAVLTFGVLMLFLE. Residues 24-51 are a coiled coil; the sequence is MLFLENQIQNLEESREKLERAIARHEVR. Over 29–356 the chain is Lumenal; sequence NQIQNLEESR…FYEKIYPKSN (328 aa). Adenosine 3',5'-bisphosphate-binding residues include Lys83, Thr84, Ala85, Ser86, Thr87, and Ser88. Residues Asn108 and Asn127 are each glycosylated (N-linked (GlcNAc...) asparagine). Active-site residues include His140 and His142. Adenosine 3',5'-bisphosphate-binding residues include Arg164 and Ser172. 2 disulfides stabilise this stretch: Cys201/Cys209 and Cys222/Cys228. Residues Tyr279, Ser285, Thr290, and Lys293 each contribute to the adenosine 3',5'-bisphosphate site.

It belongs to the sulfotransferase 3 family. In terms of assembly, homotrimer.

The protein localises to the golgi apparatus membrane. Its function is as follows. Catalyzes the transfer of a sulfo group from 3'-phospho-5'-adenylyl sulfate (PAPS) to the 2-OH position of iduronic acid (IdoA) or glucuronic acid (GlcA) within the heparan sulfate (HS) chain and participates in HS biosynthesis. The chain is Heparan sulfate 2-O-sulfotransferase 1 from Xenopus laevis (African clawed frog).